The chain runs to 1338 residues: Nonribosomal peptide synthetase astA (1338 aa).

Residues Ile22–Leu52 are disordered. The adenylation stretch occupies residues Phe271–Arg681. The Carrier domain maps to Thr820 to Gly893. The residue at position 854 (Ser854) is an O-(pantetheine 4'-phosphoryl)serine. The interval Thr949 to Ser1336 is condensation.

This sequence belongs to the NRP synthetase family.

It carries out the reaction 7beta,14,16-trihydroxyconfertifolin + benzoate + H(+) = dideacetyl astellolide A + H2O. It catalyses the reaction 7beta,14,16-trihydroxyconfertifolin + 4-hydroxybenzoate + H(+) = dideacetyl astellolide B + H2O. It participates in secondary metabolite biosynthesis; terpenoid biosynthesis. Nonribosomal peptide synthetase; part of the gene cluster that mediates the biosynthesis of astellolides, drimane-type sesquiterpene esters that show antimicrobial, anti-inflammatory, and anti-tumor activities. The first step in astellolide biosynthesis is performed by the sesquiterpene cyclase astC that catalyzes the formation of drimanyl pyrophosphate from farnesyl pyrophosphate. Drimanyl pyrophosphate is then dephosphorylated by the sesquiterpene phosphatase astI to produce drimanyl monophosphate which is further dephosphorylated to drim-8-ene-11-ol by atsK. Drim-8-ene-11-ol is converted to confertifolin, probably by the cytochrome P450 monooxygenase astD and/or the dehydrogenase astE. The cytochrome P450 monooxygenases astB, astF and astJ then hydroxylate confertifolin at C6, C14, or C15 to form trihydroxy confertifolin. The nonribosomal peptide synthetase astA catalyzes ester bond formation between trihydroxy contifolin and benzoic acid (BA) or 4-hydroxy benzoic acid (4HBA), leading to the formation of dideacetyl astellolides A and B, respectively. Finally, the O-acetyltransferase astG converts dideacetyl astellolides A and B into deacetyl astellolides A and B. The protein is Nonribosomal peptide synthetase astA of Aspergillus oryzae (strain ATCC 42149 / RIB 40) (Yellow koji mold).